A 172-amino-acid chain; its full sequence is Shikimate kinase (172 aa).

11–16 (GAGKST) serves as a coordination point for ATP. S15 lines the Mg(2+) pocket. Substrate-binding residues include D33, R57, and G79. R117 serves as a coordination point for ATP. R136 is a substrate binding site. ATP is bound at residue R153.

It belongs to the shikimate kinase family. As to quaternary structure, monomer. The cofactor is Mg(2+).

The protein resides in the cytoplasm. It carries out the reaction shikimate + ATP = 3-phosphoshikimate + ADP + H(+). The protein operates within metabolic intermediate biosynthesis; chorismate biosynthesis; chorismate from D-erythrose 4-phosphate and phosphoenolpyruvate: step 5/7. Functionally, catalyzes the specific phosphorylation of the 3-hydroxyl group of shikimic acid using ATP as a cosubstrate. The protein is Shikimate kinase of Pseudomonas aeruginosa (strain LESB58).